The chain runs to 525 residues: Sodium-dependent lysophosphatidylcholine symporter 1 (525 aa).

The disordered stretch occupies residues 1-29 (MEKESENASCAGLLGQKNEPGSPTQSRSG). The Cytoplasmic portion of the chain corresponds to 1–32 (MEKESENASCAGLLGQKNEPGSPTQSRSGKHK). Residues 33–62 (LSVCSKICFAIGGAPYQITGCALGFFLQIF) form a helical membrane-spanning segment. The Extracellular portion of the chain corresponds to 63–73 (LLDIAQVPPFY). A helical membrane pass occupies residues 74 to 94 (ASIILFSGRVWDAITDPLVGF). Topologically, residues 95 to 106 (FVSKSSWTRLGR) are cytoplasmic. Residues 107–126 (LLPWVVFSTPFAVVSYLLIW) traverse the membrane as a helical segment. The Extracellular portion of the chain corresponds to 127–137 (FVPGFSGVSMV). The chain crosses the membrane as a helical span at residues 138–162 (IWYLVFYCLFQTLVTCFHVPYSALT). The Cytoplasmic segment spans residues 163 to 169 (MFISKEQ). The chain crosses the membrane as a helical span at residues 170 to 201 (SDRDSATGYRMTVEVLGTVLGTAIQGQIVGRE). The Extracellular segment spans residues 202–226 (NTPCVEHIRETHLYNTSVIMEDLNI). C205 and C458 are disulfide-bonded. N216 and N225 each carry an N-linked (GlcNAc...) asparagine glycan. A helical membrane pass occupies residues 227–260 (THDVESLSSTRDAYMIAAGVICAIYVLCAIILTL). The Cytoplasmic portion of the chain corresponds to 261 to 291 (GVREKRDAYELLSDQPFSFWQGLKLVMSHKP). The chain crosses the membrane as a helical span at residues 292 to 318 (YIKLITGFLFTSLAFMLLEGNFALFLT). Over 319-329 (YTMGFRRDFQN) the chain is Extracellular. Residues 330–348 (ILLVVMLSATLTVPFWQWF) form a helical membrane-spanning segment. Topologically, residues 349–352 (LTRF) are cytoplasmic. Residues 353–374 (GKKTAVYFGISSVIPFLILVVL) traverse the membrane as a helical segment. The Extracellular portion of the chain corresponds to 375-377 (MES). The helical transmembrane segment at 378-414 (NLILAYVVAVAAGLSVAAAFLLPWSMLPDVIDDFILK) threads the bilayer. Topologically, residues 415 to 424 (NPDSHGHEPI) are cytoplasmic. A helical transmembrane segment spans residues 425-451 (FFSFYVFFTKFASGVSLGISTLSLDFA). The Extracellular segment spans residues 452 to 463 (GYQTRACSQPEQ). A helical transmembrane segment spans residues 464-487 (VNLTLKMLICVAPVILILLGLLLF). The Cytoplasmic portion of the chain corresponds to 488–525 (ILYPINEEKRKQNKKALQLIRESNRDSDSDSLELASNV).

The protein belongs to the major facilitator superfamily.

Its subcellular location is the cell membrane. The protein localises to the endoplasmic reticulum membrane. The enzyme catalyses a 1-acyl-sn-glycero-3-phosphocholine(in) + Na(+)(in) = a 1-acyl-sn-glycero-3-phosphocholine(out) + Na(+)(out). It catalyses the reaction 1-(4Z,7Z,10Z,13Z,16Z,19Z-docosahexaenoyl)-sn-glycero-3-phosphocholine(in) + Na(+)(in) = 1-(4Z,7Z,10Z,13Z,16Z,19Z-docosahexaenoyl)-sn-glycero-3-phosphocholine(out) + Na(+)(out). The catalysed reaction is 1-(9Z-octadecenoyl)-sn-glycero-3-phosphocholine(in) + Na(+)(in) = 1-(9Z-octadecenoyl)-sn-glycero-3-phosphocholine(out) + Na(+)(out). It carries out the reaction 1-hexadecanoyl-sn-glycero-3-phosphocholine(in) + Na(+)(in) = 1-hexadecanoyl-sn-glycero-3-phosphocholine(out) + Na(+)(out). The enzyme catalyses a 1-acyl-sn-glycero-3-phosphoethanolamine(in) + Na(+)(in) = a 1-acyl-sn-glycero-3-phosphoethanolamine(out) + Na(+)(out). In terms of biological role, sodium-dependent lysophosphatidylcholine (LPC) symporter, which plays an essential role for blood-brain barrier formation and function. Specifically expressed in endothelium of the blood-brain barrier of micro-vessels and transports LPC into the brain. Transport of LPC is essential because it constitutes the major mechanism by which docosahexaenoic acid (DHA), an omega-3 fatty acid that is essential for normal brain growth and cognitive function, enters the brain. Transports LPC carrying long-chain fatty acids such LPC oleate and LPC palmitate with a minimum acyl chain length of 14 carbons. Does not transport docosahexaenoic acid in unesterified fatty acid. This is Sodium-dependent lysophosphatidylcholine symporter 1 (mfsd2a) from Xenopus tropicalis (Western clawed frog).